A 551-amino-acid chain; its full sequence is Endolytic murein transglycosylase (551 aa).

The Cytoplasmic segment spans residues 1–187 (MSEKSREEEK…PKKEKKSHVK (187 aa)). Residues 38–180 (VRTPANEPSA…EGAKPAKPKK (143 aa)) are disordered. Composition is skewed to low complexity over residues 100 to 110 (PSSPAEESGSR) and 145 to 157 (QAGPETPTPATET). Residues 159–174 (DIIRDTSRRSRREGAK) are compositionally biased toward basic and acidic residues. The chain crosses the membrane as a helical span at residues 188 to 208 (AFVISFLVFLALLSAGGYFGY). At 209–551 (QYVLDSLLPI…VAEHVNSKLN (343 aa)) the chain is on the extracellular side.

Belongs to the transglycosylase MltG family. Interacts with RodZ. Interacts with MreC in the elongasome; interaction is strongly reduced when the 90 C-terminal residues of MreC are missing. Interacts with KhpB (also called EloR/Jag) via MltG's N-terminus, suggesting the N-terminus of MltG is cytoplasmic.

The protein localises to the cell membrane. The enzyme catalyses a peptidoglycan chain = a peptidoglycan chain with N-acetyl-1,6-anhydromuramyl-[peptide] at the reducing end + a peptidoglycan chain with N-acetylglucosamine at the non-reducing end.. In terms of biological role, functions as a peptidoglycan terminase that cleaves nascent peptidoglycan strands endolytically to terminate their elongation. Functionally, mutations in this gene suppress deletion of PBP2b (penA); truncation at residue 168, undefined changes between residue Ile-447 and Ala-505, and mutation of Ala-505 suppress the penA deletion. Probably part of the elongasome which synthesizes peripheral peptidoglycan. This is Endolytic murein transglycosylase from Streptococcus pneumoniae (strain ATCC BAA-255 / R6).